The primary structure comprises 1405 residues: DNA-directed RNA polymerase subunit beta' (1405 aa).

Zn(2+) contacts are provided by C70, C72, C85, and C88. Residues D460, D462, and D464 each contribute to the Mg(2+) site. Zn(2+)-binding residues include C814, C888, C895, and C898.

It belongs to the RNA polymerase beta' chain family. The RNAP catalytic core consists of 2 alpha, 1 beta, 1 beta' and 1 omega subunit. When a sigma factor is associated with the core the holoenzyme is formed, which can initiate transcription. It depends on Mg(2+) as a cofactor. Zn(2+) is required as a cofactor.

It catalyses the reaction RNA(n) + a ribonucleoside 5'-triphosphate = RNA(n+1) + diphosphate. In terms of biological role, DNA-dependent RNA polymerase catalyzes the transcription of DNA into RNA using the four ribonucleoside triphosphates as substrates. The sequence is that of DNA-directed RNA polymerase subunit beta' from Shewanella woodyi (strain ATCC 51908 / MS32).